The sequence spans 328 residues: L-lactate dehydrogenase (328 aa).

Residues valine 18, glutamate 39, lysine 46, tyrosine 71, and 85–86 (GA) each bind NAD(+). Substrate contacts are provided by glutamine 88 and arginine 94. Residues serine 107, 124-126 (AAN), and serine 149 contribute to the NAD(+) site. 126–129 (NPVD) lines the substrate pocket. 154-157 (DSAR) is a binding site for substrate. Beta-D-fructose 1,6-bisphosphate is bound by residues arginine 159 and histidine 174. Histidine 181 functions as the Proton acceptor in the catalytic mechanism. Tyrosine 226 is subject to Phosphotyrosine. Substrate is bound at residue threonine 235.

Belongs to the LDH/MDH superfamily. LDH family. Homotetramer.

Its subcellular location is the cytoplasm. It carries out the reaction (S)-lactate + NAD(+) = pyruvate + NADH + H(+). It participates in fermentation; pyruvate fermentation to lactate; (S)-lactate from pyruvate: step 1/1. With respect to regulation, allosterically activated by fructose 1,6-bisphosphate (FBP). Catalyzes the conversion of lactate to pyruvate. In Streptococcus thermophilus (strain CNRZ 1066), this protein is L-lactate dehydrogenase.